The primary structure comprises 469 residues: Citrate synthase, mitochondrial (469 aa).

The transit peptide at 1–28 directs the protein to the mitochondrion; that stretch reads MAFFRTVTKLRSRLGQPPSLRDSVRCLQ. Active-site residues include His304, His350, and Asp405.

The protein belongs to the citrate synthase family. As to quaternary structure, homodimer.

Its subcellular location is the mitochondrion matrix. The catalysed reaction is oxaloacetate + acetyl-CoA + H2O = citrate + CoA + H(+). It participates in carbohydrate metabolism; tricarboxylic acid cycle; isocitrate from oxaloacetate: step 1/2. The sequence is that of Citrate synthase, mitochondrial (MCSI) from Fragaria ananassa (Strawberry).